We begin with the raw amino-acid sequence, 257 residues long: MSVPLILTLLAGAATFIGAILGVIGQKPSNRVLAFSLGFAAGIMLLISLMEMLPAALRTDGMSPVMGYGMFVVGLLGYFALDKMLPHAHPQDLMQKNAKPTRGNIKRTAILLTLGISLHNFPEGVATYVTASNNLELGFGIALAVALHNIPEGLAVAGPVYAATGSKRTAILWAGISGLAEILGGVLTWLILGSMISPVVMAAIMAAVAGIMVALSVDELMPLAKEIDPNNNPSYGVLCGMSVMGLSLVLLQTAGFG.

8 helical membrane-spanning segments follow: residues 5-25, 32-52, 61-81, 109-129, 137-157, 171-191, 195-215, and 236-256; these read LILT…GVIG, VLAF…LMEM, GMSP…YFAL, AILL…ATYV, LGFG…LAVA, ILWA…TWLI, MISP…MVAL, and GVLC…TAGF. Fe(2+)-binding residues include Asn-120 and Glu-123. Zn(2+)-binding residues include Glu-123 and His-148. Fe(2+)-binding residues include Asn-149, Glu-152, and Glu-181. Residue Glu-152 coordinates Zn(2+).

It belongs to the ZIP transporter (TC 2.A.5) family. ZupT subfamily.

Its subcellular location is the cell inner membrane. The catalysed reaction is Zn(2+)(in) = Zn(2+)(out). Functionally, mediates zinc uptake. May also transport other divalent cations. This chain is Zinc transporter ZupT, found in Enterobacter sp. (strain 638).